The primary structure comprises 512 residues: Metal transporter Nramp4 (512 aa).

The next 12 helical transmembrane spans lie at 52–72 (LWLF…PGNL), 80–100 (AIAG…GLLI), 129–149 (MVLW…EVIG), 161–181 (LVPL…FLFL), 189–209 (LEAV…WMFG), 235–255 (AVGI…SALV), 277–297 (IEST…TTVF), 323–343 (YGGG…AAGQ), 371–391 (ALIT…VFDS), 402–422 (WLNV…LCLV), 440–460 (ISWI…VDFF), and 468–488 (ILLV…LYLI).

The protein belongs to the NRAMP (TC 2.A.55) family. Expressed in vascular tissues.

It is found in the vacuole membrane. Functionally, vacuolar metal transporter involved in intracellular metal homeostasis. Can transport iron (Fe), manganese (Mn) and cadmium (Cd). Regulates metal accumulation under Fe starvation. Acts redundantly with NRAMP3 to mobilize vacuolar Fe and provide sufficient Fe during seed germination. In association with NRAMP3, required for optimal growth and photosynthesis under Mn deficiency. Exports Mn from vacuoles in leaf mesophyll cells, making Mn available for functional photosystem II in chloroplasts. The chain is Metal transporter Nramp4 (NRAMP4) from Arabidopsis thaliana (Mouse-ear cress).